We begin with the raw amino-acid sequence, 533 residues long: Retinoic acid receptor RXR-beta (533 aa).

The disordered stretch occupies residues 1-24 (MSWAARPPFLPQRHAAGQCGPVGV). The tract at residues 1-204 (MSWAARPPFL…PGGPGAGKRL (204 aa)) is modulating. Omega-N-methylarginine is present on Arg25. A disordered region spans residues 37 to 183 (RRRRPWLDPA…GPPEDVKPPV (147 aa)). The segment covering 46 to 61 (AAAAAAAAAAGEQQTP) has biased composition (low complexity). Positions 67 to 82 (EAGRDGMGDSGRDSRS) are enriched in basic and acidic residues. The span at 83–94 (PDSSSPNPLSQG) shows a compositional bias: low complexity. Pro residues-rich tracts occupy residues 95 to 109 (APPP…PPSS) and 118 to 129 (APPPPPMPPPQL). Residues 130 to 143 (GSPFPVISSSMGSP) show a composition bias toward low complexity. Residues 144–153 (GLPPPAPPGF) are compositionally biased toward pro residues. 2 NR C4-type zinc fingers span residues 205-225 (CAIC…CEGC) and 241-265 (CRDN…YQKC). Residues 205–270 (CAICGDRSSG…RYQKCLATGM (66 aa)) constitute a DNA-binding region (nuclear receptor). The hinge stretch occupies residues 271 to 295 (KREAVQEERQRGKDKDGDGEGAGGA). Residues 276-288 (QEERQRGKDKDGD) show a composition bias toward basic and acidic residues. 2 disordered regions span residues 276–299 (QEER…PEEM) and 313–336 (QKSD…NDPV). An NR LBD domain is found at 296 to 529 (PEEMPVDRIL…TFLMEMLEAP (234 aa)). The segment covering 320–329 (EGPGGTGGSG) has biased composition (gly residues).

This sequence belongs to the nuclear hormone receptor family. NR2 subfamily. In terms of assembly, homodimer (in vitro). Heterodimer with other retinoic acid receptor family members. Binds DNA preferentially as a RAR/RXR heterodimer. Interacts with NR1H3. Interacts with AKAP13.

The protein localises to the nucleus. It is found in the cytoplasm. In terms of biological role, receptor for retinoic acid. Retinoic acid receptors bind as heterodimers to their target response elements in response to their ligands, all-trans or 9-cis retinoic acid, and regulate gene expression in various biological processes. The RAR/RXR heterodimers bind to the retinoic acid response elements (RARE). In Canis lupus familiaris (Dog), this protein is Retinoic acid receptor RXR-beta (RXRB).